The chain runs to 209 residues: Ancillary SecYEG translocon subunit (209 aa).

Over 1–23 the chain is Cytoplasmic; it reads MAAHLEEQQELDNFKYFWKTTGK. The helical transmembrane segment at 24-42 threads the bilayer; sequence WLFALLILAALGYLGYTVY. The Periplasmic portion of the chain corresponds to 43–209; that stretch reads QNRAASQNQE…LLQMKLDSLK (167 aa). A TPR repeat occupies 161-194; the sequence is PLLMETKGDVYAAQEKSQEALKNYGQALEKMPQD.

It belongs to the YfgM family. As to quaternary structure, interacts with the SecYEG translocon. Forms a complex with PpiD.

It localises to the cell inner membrane. In terms of biological role, may mediate protein transfer from the SecYEG translocon to the periplasmic chaperone network via its periplasmic C-terminal region. The polypeptide is Ancillary SecYEG translocon subunit (Neisseria gonorrhoeae (strain ATCC 700825 / FA 1090)).